A 186-amino-acid chain; its full sequence is Glycerol-3-phosphate acyltransferase 1 (186 aa).

The next 5 membrane-spanning stretches (helical) occupy residues 9–29 (MQFL…AYIV), 58–78 (GYFV…VSIA), 85–105 (STFV…PVLF), 121–141 (IAFD…FYLI), and 161–181 (ILYS…VLIL).

The protein belongs to the PlsY family. Probably interacts with PlsX.

The protein resides in the cell membrane. It catalyses the reaction an acyl phosphate + sn-glycerol 3-phosphate = a 1-acyl-sn-glycero-3-phosphate + phosphate. Its pathway is lipid metabolism; phospholipid metabolism. In terms of biological role, catalyzes the transfer of an acyl group from acyl-phosphate (acyl-PO(4)) to glycerol-3-phosphate (G3P) to form lysophosphatidic acid (LPA). This enzyme utilizes acyl-phosphate as fatty acyl donor, but not acyl-CoA or acyl-ACP. The sequence is that of Glycerol-3-phosphate acyltransferase 1 from Bacillus cereus (strain ZK / E33L).